Reading from the N-terminus, the 247-residue chain is uncharacterized protein (247 aa).

This is an uncharacterized protein from Archaeoglobus fulgidus (strain ATCC 49558 / DSM 4304 / JCM 9628 / NBRC 100126 / VC-16).